Reading from the N-terminus, the 454-residue chain is Neuronal acetylcholine receptor subunit alpha-5 (454 aa).

A disordered region spans residues 1 to 26 (MPLRARSRKPGAGPAARAPQAGVSEP). Positions 1–29 (MPLRARSRKPGAGPAARAPQAGVSEPSFV) are cleaved as a signal peptide. Over residues 10-22 (PGAGPAARAPQAG) the composition is skewed to low complexity. The Extracellular portion of the chain corresponds to 30–240 (AKSEDRLFKH…IIRRLPLFYT (211 aa)). Residues asparagine 55, asparagine 169, and asparagine 215 are each glycosylated (N-linked (GlcNAc...) asparagine). Cysteine 156 and cysteine 170 are oxidised to a cystine. Cysteine 220 and cysteine 221 form a disulfide bridge. The next 3 helical transmembrane spans lie at 241 to 261 (LFLI…FYLP), 270 to 290 (LCTS…EIIP), and 303 to 323 (LVFT…AINI). The Cytoplasmic segment spans residues 324–416 (HHRSSSTHNA…KFIAQVLDRM (93 aa)). Residues 417 to 437 (FLWAFLLVSIIGSLVLFIPVI) traverse the membrane as a helical segment. At 438–454 (HKWASIIVPVHIGSTNT) the chain is on the extracellular side.

The protein belongs to the ligand-gated ion channel (TC 1.A.9) family. Acetylcholine receptor (TC 1.A.9.1) subfamily. Alpha-5/CHRNA5 sub-subfamily. Neuronal AChR that forms heteropentamers composed of two different type of subunits: alpha and non-alpha (beta). CHRNA5/alpha-5 subunit is only able to form functional nAChRs when co-assembled with another alpha subunit, can be combined to CHRNA4/alpha-4 or CHRNA3/alpha-3 and CHRNB4/beta-4 or CHRNB2/beta-2 to give rise to functional receptors. Interacts with LYPD6.

It is found in the synaptic cell membrane. Its subcellular location is the cell membrane. It carries out the reaction Ca(2+)(in) = Ca(2+)(out). The catalysed reaction is K(+)(in) = K(+)(out). The enzyme catalyses Na(+)(in) = Na(+)(out). With respect to regulation, activated by a myriad of ligands such as acetylcholine, cytisine, nicotine, choline and epibatidine. Component of neuronal acetylcholine receptors (nAChRs) that function as pentameric, ligand-gated cation channels with high calcium permeability among other activities. nAChRs are excitatory neurotrasnmitter receptors formed by a collection of nAChR subunits known to mediate synaptic transmission in the nervous system and the neuromuscular junction. Each nAchR subunit confers differential attributes to channel properties, including activation, deactivation and desensitization kinetics, pH sensitivity, cation permeability, and binding to allosteric modulators. Has an accessory rather than functional role and is only able to form functional nAChRs when co-assembled with another beta subunit. Participates in pentameric assemblies along with CHRNA3, CHRNA4, CHRNB2 and CHRNB4. Increases receptor sensitivity to acetylcholine and nicotine when associated with CHRNA4 and CHRNB2. Plays a role in nicotine addiction. The chain is Neuronal acetylcholine receptor subunit alpha-5 (CHRNA5) from Gallus gallus (Chicken).